A 98-amino-acid polypeptide reads, in one-letter code: Integration host factor subunit alpha (98 aa).

The protein belongs to the bacterial histone-like protein family. In terms of assembly, heterodimer of an alpha and a beta chain.

In terms of biological role, this protein is one of the two subunits of integration host factor, a specific DNA-binding protein that functions in genetic recombination as well as in transcriptional and translational control. This chain is Integration host factor subunit alpha, found in Glaesserella parasuis serovar 5 (strain SH0165) (Haemophilus parasuis).